Consider the following 282-residue polypeptide: NADPH-dependent 7-cyano-7-deazaguanine reductase (282 aa).

88–90 contacts substrate; sequence IES. 90-91 is an NADPH binding site; it reads SK. The active-site Thioimide intermediate is the Cys190. Catalysis depends on Asp197, which acts as the Proton donor. 229–230 lines the substrate pocket; that stretch reads HE. An NADPH-binding site is contributed by 258 to 259; sequence RG.

This sequence belongs to the GTP cyclohydrolase I family. QueF type 2 subfamily. As to quaternary structure, homodimer.

The protein localises to the cytoplasm. It catalyses the reaction 7-aminomethyl-7-carbaguanine + 2 NADP(+) = 7-cyano-7-deazaguanine + 2 NADPH + 3 H(+). Its pathway is tRNA modification; tRNA-queuosine biosynthesis. Functionally, catalyzes the NADPH-dependent reduction of 7-cyano-7-deazaguanine (preQ0) to 7-aminomethyl-7-deazaguanine (preQ1). The protein is NADPH-dependent 7-cyano-7-deazaguanine reductase of Escherichia coli (strain SMS-3-5 / SECEC).